Reading from the N-terminus, the 209-residue chain is Ribonuclease HII (209 aa).

Positions 20 to 209 (GLVAGVDEAG…VARSLPGACR (190 aa)) constitute an RNase H type-2 domain. Positions 26, 27, and 118 each coordinate a divalent metal cation.

The protein belongs to the RNase HII family. It depends on Mn(2+) as a cofactor. Requires Mg(2+) as cofactor.

The protein localises to the cytoplasm. The catalysed reaction is Endonucleolytic cleavage to 5'-phosphomonoester.. In terms of biological role, endonuclease that specifically degrades the RNA of RNA-DNA hybrids. This chain is Ribonuclease HII, found in Verminephrobacter eiseniae (strain EF01-2).